Consider the following 254-residue polypeptide: MDRSGYFPVLDEDIPTKSELRLPLESKTSSRSRRWLHLVLVLQSVLIISLLASLHILGNRQPSNITCAKQLSPYSPYLEDGDLELEEFTELNHLMQPSPYRGQPTPEIEEAWVRLWRDYAHVSTRYGDDMLGFLNVFHQLHCLNLVRQYTYRDDYDYSNVTAFRAPQELVRGHIDHCIETIRKSIMCASDVTPVVFQLDDSRKSGFKSDFNMRRTCRNFDKIQDWAVANAVQGDFEKNMASSCTLSTPREKEKT.

Residues 38 to 58 traverse the membrane as a helical segment; sequence LVLVLQSVLIISLLASLHILG. N-linked (GlcNAc...) asparagine glycosylation is present at Asn-64. Residues 138-142 carry the HXXHC 1 motif; sequence HQLHC. N-linked (GlcNAc...) asparagine glycosylation is present at Asn-159. Residues 173–177 carry the HXXHC 2 motif; the sequence is HIDHC.

It belongs to the ustYa family.

It localises to the membrane. It functions in the pathway mycotoxin biosynthesis. Its function is as follows. UstYa family oxidase; part of the gene cluster that mediates the biosynthesis of the phomopsins, a group of hexapeptide mycotoxins which infects lupins and causes lupinosis disease in livestock. Within the pathway, phomYc' catalyzes the desaturation of the Ile moiety into 2,3-dehydroisoleucine (dIle). The pathway starts with the processing of the precursor phomA' by several endopeptidases including kexin proteases as well as the cluster-specific S41 family peptidase phomP1 and the oligopeptidase phomG' to produce 10 identical copies of the hexapeptide Tyr-Val-Ile-Pro-Ile-Asp. After being excised from the precursor peptide, the core peptides are cyclized and modified post-translationally by enzymes encoded within the gene cluster. The timing and order of proteolysis of the phomA' precursor and PTMs are still unknown. Two tyrosinase-like enzymes, phomQ1' and phomQ2, catalyze the chlorination and hydroxylation of Tyr, respectively. PhomYb, is proposed to be involved in the construction of the macrocyclic structure. The other 4 ustYa family proteins may be involved in PTMs that generate the unique structure of phomopsin A. PhomYa' is required for the hydroxylation of C-beta of Tyr. PhomYc', phomYd', and phomYe are responsible for the biosynthesis of 2,3-dehydroisoleucine (dIle), 2,3-dehydroaspartic acid (dAsp), and 3,4-dehydroproline (dPro), respectively. While dIle formation by phomYc' is indispensable for the installation of dAsp by phomYd', the order of the other PTMs have not been elucidated yet. Most of the biosynthetic enzymes likely have broad substrate specificity, and thus, there might be a metabolic grid from a precursor to phomopsin A. The enzyme(s) responsible for the biosynthesis of 3,4-dehydrovaline (dVal) have also not been identified yet. Finally, phomM' acts as an S-adenosylmethionine-dependent alpha-N-methyltransferase that catalyzes two successive N-methylation reactions, converting N-desmethyl-phomopsin A to phomopsin A and phomopsin A further to an N,N-dimethylated congener called phomopsin E. The protein is UstYa family oxidase phomYc' of Diaporthe leptostromiformis (Lupinosis disease fungus).